A 445-amino-acid chain; its full sequence is MSNRNLRSSTNSEFSEGQHQTPSSDSSGHGEDQPQASPGPNKKSHTPKKNISKGAVLHEKPMTVMVLTATEPFNYKEGKENMFHATVATESQYYRVKVFNMDLKEKFTENKFITISKYFNSSGILEINETATVSEAAPNQIIEVPKNIIRSAKETLKISKIKELDSGTLIYGVFAVEKKKVNDKSITFKIKDNEDNIKVVWDKKQHNINYEKGDKLQLFSFHLRKGNGKPILHSGNHSFIKGEKLLKESFEGDGYHKGPKQVVALKATKLFTYDSIKSKKMFHATVATDTEFFRVMVFEENLEKKFIPGNTIALSDYFGMYGSLAIHEYSSVSEVKSQNKEDSSSSDERLIEHLKICDLHLQTKERLVDGEFKVYRKSTGNNCICYGIWDDTGAMKVVVSGQLTSVNCEIGNTIRLVCFELTSNADEWFLRSTRYSYMEVIMPEK.

Polar residues predominate over residues 1 to 27; sequence MSNRNLRSSTNSEFSEGQHQTPSSDSS. Positions 1–57 are disordered; sequence MSNRNLRSSTNSEFSEGQHQTPSSDSSGHGEDQPQASPGPNKKSHTPKKNISKGAVL. Residues 42-51 are compositionally biased toward basic residues; that stretch reads KKSHTPKKNI. 2 HIN-200 domains span residues 46–243 and 244–441; these read TPKK…IKGE and KLLK…MEVI. 2 required for homomultimerization regions span residues 82–89 and 281–288; these read MFHATVAT.

Belongs to the HIN-200 family. In terms of assembly, homomultimer; homotetramerizes (via HIN-200 domain 2), enhancing affinity for double-stranded DNA (dsDNA). Interacts (via HIN-200 domain 2) with AIM2 (via HIN-200 domain); preventing activation of the AIM2 inflammasome. Binds to several transcription factors, including NF-kappa-B p50 (NFKB1) and p65 (RELA), FOS, JUN, E2F1, E2F4, MYOD1 and myogenin. Also binds TP53/p53, the hypophosphorylated, growth-inhibitory form of the retinoblastoma protein and the p53-binding protein 1 (TP53BP1). Post-translationally, phosphorylated.

It is found in the cytoplasm. It localises to the nucleus. Functionally, DNA-binding protein involved in innate immune response and has anti-inflammatory activity. Inhibits caspase activation in response to cytosolic DNA by preventing activation of the AIM2 inflammasome, probably by sequestering cytoplasmic DNA and preventing its being bound by AIM2. Also inhibits activation of the AIM2 inflammasome via a direct interaction with AIM2, which prevents the interaction between AIM2 and PYCARD and formation of the AIM2 inflammasome. Binds double-stranded DNA (dsDNA) in the cytosol. Has anti-apoptotic effects due to inhibition of the transcriptional activity of TP53/p53. Inhibits the transcriptional activity of several transcription factors, including NF-kappa-B p50 and p65, FOS, JUN, E2F1, E2F4, MYOD1 and myogenin. In Mus musculus (Mouse), this protein is Interferon-activable protein 202.